A 325-amino-acid polypeptide reads, in one-letter code: 4-diphosphocytidyl-2-C-methyl-D-erythritol kinase (325 aa).

Residue lysine 22 is part of the active site. 110 to 120 (PVAGGMAGGSA) contributes to the ATP binding site. The active site involves aspartate 152. Positions 306–325 (PAPGARVLEAVSTPSPGGRS) are disordered.

It belongs to the GHMP kinase family. IspE subfamily.

It carries out the reaction 4-CDP-2-C-methyl-D-erythritol + ATP = 4-CDP-2-C-methyl-D-erythritol 2-phosphate + ADP + H(+). The protein operates within isoprenoid biosynthesis; isopentenyl diphosphate biosynthesis via DXP pathway; isopentenyl diphosphate from 1-deoxy-D-xylulose 5-phosphate: step 3/6. In terms of biological role, catalyzes the phosphorylation of the position 2 hydroxy group of 4-diphosphocytidyl-2C-methyl-D-erythritol. This Kineococcus radiotolerans (strain ATCC BAA-149 / DSM 14245 / SRS30216) protein is 4-diphosphocytidyl-2-C-methyl-D-erythritol kinase.